The primary structure comprises 326 residues: Tetraacyldisaccharide 4'-kinase (326 aa).

55–62 (TAGGNGKT) contacts ATP.

Belongs to the LpxK family.

The enzyme catalyses a lipid A disaccharide + ATP = a lipid IVA + ADP + H(+). It participates in glycolipid biosynthesis; lipid IV(A) biosynthesis; lipid IV(A) from (3R)-3-hydroxytetradecanoyl-[acyl-carrier-protein] and UDP-N-acetyl-alpha-D-glucosamine: step 6/6. Functionally, transfers the gamma-phosphate of ATP to the 4'-position of a tetraacyldisaccharide 1-phosphate intermediate (termed DS-1-P) to form tetraacyldisaccharide 1,4'-bis-phosphate (lipid IVA). In Erwinia tasmaniensis (strain DSM 17950 / CFBP 7177 / CIP 109463 / NCPPB 4357 / Et1/99), this protein is Tetraacyldisaccharide 4'-kinase.